The sequence spans 160 residues: Cytochrome b6-f complex subunit 4 (160 aa).

3 helical membrane-spanning segments follow: residues 36 to 56 (LLYI…GLAV), 95 to 115 (LLGV…PFLE), and 131 to 151 (TVFL…TLPI).

This sequence belongs to the cytochrome b family. PetD subfamily. In terms of assembly, the 4 large subunits of the cytochrome b6-f complex are cytochrome b6, subunit IV (17 kDa polypeptide, petD), cytochrome f and the Rieske protein, while the 4 small subunits are petG, petL, petM and petN. The complex functions as a dimer.

The protein resides in the plastid. The protein localises to the chloroplast thylakoid membrane. Functionally, component of the cytochrome b6-f complex, which mediates electron transfer between photosystem II (PSII) and photosystem I (PSI), cyclic electron flow around PSI, and state transitions. The protein is Cytochrome b6-f complex subunit 4 of Oryza nivara (Indian wild rice).